The following is a 193-amino-acid chain: Peptidyl-tRNA hydrolase 1 (193 aa).

Position 27 (Tyr-27) interacts with tRNA. His-32 (proton acceptor) is an active-site residue. Phe-80, Asn-82, and Asn-128 together coordinate tRNA.

Belongs to the PTH family. As to quaternary structure, monomer.

The protein localises to the cytoplasm. It catalyses the reaction an N-acyl-L-alpha-aminoacyl-tRNA + H2O = an N-acyl-L-amino acid + a tRNA + H(+). In terms of biological role, hydrolyzes ribosome-free peptidyl-tRNAs (with 1 or more amino acids incorporated), which drop off the ribosome during protein synthesis, or as a result of ribosome stalling. Catalyzes the release of premature peptidyl moieties from peptidyl-tRNA molecules trapped in stalled 50S ribosomal subunits, and thus maintains levels of free tRNAs and 50S ribosomes. The sequence is that of Peptidyl-tRNA hydrolase 1 from Corynebacterium jeikeium (strain K411).